Here is a 582-residue protein sequence, read N- to C-terminus: Inactive metallocarboxypeptidase ECM14 (582 aa).

Positions 1 to 20 (MHILQVITGATLVSVPFVSA) are cleaved as a signal peptide. The propeptide occupies 21-172 (IPSSTSEFLP…QAVYESYPQP (152 aa)). In terms of domain architecture, Peptidase M14 spans 200 to 522 (DYQPLSVIIP…NAVLVFGQFL (323 aa)). Residues H265 and E268 each coordinate Zn(2+). Residues 265–268 (HARE), R323, and 340–341 (DR) each bind substrate. C334 and C357 form a disulfide bridge. N-linked (GlcNAc...) asparagine glycosylation is found at N381 and N387. H397 contacts Zn(2+). Position 398–399 (398–399 (SY)) interacts with substrate. The segment covering 561–571 (SNQLEDDDNEN) has biased composition (acidic residues). The interval 561–582 (SNQLEDDDNENDTLLGFRTQKV) is disordered. N-linked (GlcNAc...) asparagine glycosylation is present at N571.

Belongs to the peptidase M14 family. Zn(2+) is required as a cofactor.

Its subcellular location is the vacuole. The protein resides in the secreted. Inactive carboxypeptidase that may play a role in cell wall organization and biogenesis. The polypeptide is Inactive metallocarboxypeptidase ECM14 (ECM14) (Coccidioides posadasii (strain C735) (Valley fever fungus)).